Here is a 597-residue protein sequence, read N- to C-terminus: ATP-dependent lipid A-core flippase (597 aa).

Helical transmembrane passes span 26 to 46 (LWPY…AMAV), 76 to 96 (WFVP…QYAS), 138 to 158 (AIVF…VTLV), 164 to 184 (VVFL…IVAV), 263 to 283 (QPLT…IAVV), and 292 to 312 (VGGF…LKHL). Residues 38–321 (IGAIVAMAVS…LMDVNQPLQR (284 aa)) enclose the ABC transmembrane type-1 domain. In terms of domain architecture, ABC transporter spans 353-590 (VEFRDVSFVY…DGLYAHLHRI (238 aa)). ATP is bound at residue 390–397 (GPSGSGKT).

The protein belongs to the ABC transporter superfamily. Lipid exporter (TC 3.A.1.106) family. As to quaternary structure, homodimer.

It is found in the cell inner membrane. The catalysed reaction is ATP + H2O + lipid A-core oligosaccharideSide 1 = ADP + phosphate + lipid A-core oligosaccharideSide 2.. In terms of biological role, involved in lipopolysaccharide (LPS) biosynthesis. Translocates lipid A-core from the inner to the outer leaflet of the inner membrane. Transmembrane domains (TMD) form a pore in the inner membrane and the ATP-binding domain (NBD) is responsible for energy generation. This Paraburkholderia xenovorans (strain LB400) protein is ATP-dependent lipid A-core flippase.